The primary structure comprises 504 residues: Glutamate--tRNA ligase (504 aa).

The 'HIGH' region motif lies at 25-35 (PSPTGNPHVGL). Cysteine 122, cysteine 124, cysteine 149, and aspartate 151 together coordinate Zn(2+). A 'KMSKS' region motif is present at residues 270-274 (KLSKR). Residue lysine 273 participates in ATP binding.

Belongs to the class-I aminoacyl-tRNA synthetase family. Glutamate--tRNA ligase type 1 subfamily. As to quaternary structure, monomer. Zn(2+) serves as cofactor.

It localises to the cytoplasm. The catalysed reaction is tRNA(Glu) + L-glutamate + ATP = L-glutamyl-tRNA(Glu) + AMP + diphosphate. Catalyzes the attachment of glutamate to tRNA(Glu) in a two-step reaction: glutamate is first activated by ATP to form Glu-AMP and then transferred to the acceptor end of tRNA(Glu). The sequence is that of Glutamate--tRNA ligase from Streptomyces griseus subsp. griseus (strain JCM 4626 / CBS 651.72 / NBRC 13350 / KCC S-0626 / ISP 5235).